A 156-amino-acid chain; its full sequence is Small ribosomal subunit protein uS7 (156 aa).

It belongs to the universal ribosomal protein uS7 family. In terms of assembly, part of the 30S ribosomal subunit. Contacts proteins S9 and S11.

Its function is as follows. One of the primary rRNA binding proteins, it binds directly to 16S rRNA where it nucleates assembly of the head domain of the 30S subunit. Is located at the subunit interface close to the decoding center, probably blocks exit of the E-site tRNA. The chain is Small ribosomal subunit protein uS7 from Carsonella ruddii.